The chain runs to 356 residues: Phospho-N-acetylmuramoyl-pentapeptide-transferase (356 aa).

A run of 10 helical transmembrane segments spans residues I4–H24, G53–W73, P76–L96, L116–V136, I152–G172, L186–F206, D228–A248, I253–V273, L278–V298, and F333–V353.

This sequence belongs to the glycosyltransferase 4 family. MraY subfamily. It depends on Mg(2+) as a cofactor.

It localises to the cell membrane. It catalyses the reaction UDP-N-acetyl-alpha-D-muramoyl-L-alanyl-gamma-D-glutamyl-meso-2,6-diaminopimeloyl-D-alanyl-D-alanine + di-trans,octa-cis-undecaprenyl phosphate = di-trans,octa-cis-undecaprenyl diphospho-N-acetyl-alpha-D-muramoyl-L-alanyl-D-glutamyl-meso-2,6-diaminopimeloyl-D-alanyl-D-alanine + UMP. Its pathway is cell wall biogenesis; peptidoglycan biosynthesis. Catalyzes the initial step of the lipid cycle reactions in the biosynthesis of the cell wall peptidoglycan: transfers peptidoglycan precursor phospho-MurNAc-pentapeptide from UDP-MurNAc-pentapeptide onto the lipid carrier undecaprenyl phosphate, yielding undecaprenyl-pyrophosphoryl-MurNAc-pentapeptide, known as lipid I. In Cutibacterium acnes (strain DSM 16379 / KPA171202) (Propionibacterium acnes), this protein is Phospho-N-acetylmuramoyl-pentapeptide-transferase.